The chain runs to 79 residues: MAKIGVENSLTDVQQALQQQGHEVITINSEHDAQGCDCCVVTGQDSNMMGIADTSIKGSVINAHGLTTDEICQQVESRI.

This sequence belongs to the UPF0180 family.

The protein is UPF0180 protein BCAH187_A1552 of Bacillus cereus (strain AH187).